A 695-amino-acid polypeptide reads, in one-letter code: NADPH--cytochrome P450 reductase (695 aa).

Residues 1-8 (MAQLDTLD) lie on the Lumenal side of the membrane. The helical transmembrane segment at 9–31 (IVVLVVLLVGSVAYFTKGSYWAV) threads the bilayer. Over 32–695 (PKDPYAAANS…SGSYQEDVWS (664 aa)) the chain is Cytoplasmic. In terms of domain architecture, Flavodoxin-like spans 66–221 (CVIFYGSQTG…DFLAWKEPMW (156 aa)). FMN is bound by residues 72 to 77 (SQTGTA), 123 to 126 (ATYG), 169 to 178 (LGNNTYEHYN), and D204. The 262-residue stretch at 277 to 538 (HNPYIAPIVE…HVRHSNFKLP (262 aa)) folds into the FAD-binding FR-type domain. R296 is a binding site for NADP(+). FAD contacts are provided by residues 451–454 (RYYS), 469–471 (TAV), and 486–489 (GVTT). Residues T552, 614 to 615 (SR), 620 to 624 (KVYVQ), and E656 each bind NADP(+). W694 contacts FAD.

The protein belongs to the NADPH--cytochrome P450 reductase family. This sequence in the N-terminal section; belongs to the flavodoxin family. In the C-terminal section; belongs to the flavoprotein pyridine nucleotide cytochrome reductase family. Requires FAD as cofactor. FMN is required as a cofactor.

The protein resides in the endoplasmic reticulum membrane. Its subcellular location is the mitochondrion outer membrane. It localises to the cell membrane. The enzyme catalyses 2 oxidized [cytochrome P450] + NADPH = 2 reduced [cytochrome P450] + NADP(+) + H(+). This enzyme is required for electron transfer from NADP to cytochrome P450 in microsomes. It can also provide electron transfer to heme oxygenase and cytochrome B5. Involved in ergosterol biosynthesis. This Aspergillus fumigatus (strain ATCC MYA-4609 / CBS 101355 / FGSC A1100 / Af293) (Neosartorya fumigata) protein is NADPH--cytochrome P450 reductase.